The chain runs to 93 residues: CRISPR-associated endoribonuclease Cas2 (93 aa).

Position 8 (aspartate 8) interacts with Mg(2+).

This sequence belongs to the CRISPR-associated endoribonuclease Cas2 protein family. Homodimer, forms a heterotetramer with a Cas1 homodimer. The cofactor is Mg(2+).

In terms of biological role, CRISPR (clustered regularly interspaced short palindromic repeat), is an adaptive immune system that provides protection against mobile genetic elements (viruses, transposable elements and conjugative plasmids). CRISPR clusters contain sequences complementary to antecedent mobile elements and target invading nucleic acids. CRISPR clusters are transcribed and processed into CRISPR RNA (crRNA). Functions as a ssRNA-specific endoribonuclease. Involved in the integration of spacer DNA into the CRISPR cassette. The polypeptide is CRISPR-associated endoribonuclease Cas2 (Thermofilum pendens (strain DSM 2475 / Hrk 5)).